The following is a 168-amino-acid chain: Phosphopantetheine adenylyltransferase (168 aa).

Threonine 14 serves as a coordination point for substrate. ATP is bound by residues 14-15 (TF) and histidine 22. 3 residues coordinate substrate: lysine 46, leucine 78, and arginine 92. ATP is bound by residues 93–95 (GLR), glutamate 103, and 128–134 (YSFISSS).

It belongs to the bacterial CoaD family. As to quaternary structure, homohexamer. Mg(2+) serves as cofactor.

It is found in the cytoplasm. The enzyme catalyses (R)-4'-phosphopantetheine + ATP + H(+) = 3'-dephospho-CoA + diphosphate. Its pathway is cofactor biosynthesis; coenzyme A biosynthesis; CoA from (R)-pantothenate: step 4/5. Functionally, reversibly transfers an adenylyl group from ATP to 4'-phosphopantetheine, yielding dephospho-CoA (dPCoA) and pyrophosphate. This is Phosphopantetheine adenylyltransferase from Xanthomonas campestris pv. campestris (strain 8004).